The following is a 396-amino-acid chain: Jacalin-related lectin 45 (396 aa).

Jacalin-type lectin domains are found at residues 3–138 (KKVT…KTSH), 144–264 (QFRM…NFAV), and 270–392 (VKKL…YVKP).

Belongs to the jacalin lectin family.

The chain is Jacalin-related lectin 45 (JAL45) from Arabidopsis thaliana (Mouse-ear cress).